Reading from the N-terminus, the 494-residue chain is Amidophosphoribosyltransferase (494 aa).

Residues 1–10 (MFNYSGLNEE) constitute a propeptide that is removed on maturation. Residue Cys11 is the Nucleophile of the active site. A Glutamine amidotransferase type-2 domain is found at 11–231 (CGVFGIWNHP…AGEYVVINDK (221 aa)). Mg(2+) is bound by residues Ser294, Asp356, and Asp357.

The protein in the C-terminal section; belongs to the purine/pyrimidine phosphoribosyltransferase family. Requires Mg(2+) as cofactor.

It catalyses the reaction 5-phospho-beta-D-ribosylamine + L-glutamate + diphosphate = 5-phospho-alpha-D-ribose 1-diphosphate + L-glutamine + H2O. The protein operates within purine metabolism; IMP biosynthesis via de novo pathway; N(1)-(5-phospho-D-ribosyl)glycinamide from 5-phospho-alpha-D-ribose 1-diphosphate: step 1/2. Functionally, catalyzes the formation of phosphoribosylamine from phosphoribosylpyrophosphate (PRPP) and glutamine. The sequence is that of Amidophosphoribosyltransferase from Staphylococcus aureus (strain MRSA252).